A 444-amino-acid chain; its full sequence is UDP-N-acetylmuramoylalanine--D-glutamate ligase (444 aa).

113 to 119 is an ATP binding site; sequence GSNGKST.

It belongs to the MurCDEF family.

It localises to the cytoplasm. The catalysed reaction is UDP-N-acetyl-alpha-D-muramoyl-L-alanine + D-glutamate + ATP = UDP-N-acetyl-alpha-D-muramoyl-L-alanyl-D-glutamate + ADP + phosphate + H(+). The protein operates within cell wall biogenesis; peptidoglycan biosynthesis. Its function is as follows. Cell wall formation. Catalyzes the addition of glutamate to the nucleotide precursor UDP-N-acetylmuramoyl-L-alanine (UMA). In Blochmanniella floridana, this protein is UDP-N-acetylmuramoylalanine--D-glutamate ligase.